Reading from the N-terminus, the 436-residue chain is Adenylyltransferase and sulfurtransferase UBA4 (436 aa).

Residues glycine 74, aspartate 95, 102–106 (SNLHR), lysine 119, and 163–164 (DT) each bind ATP. The Zn(2+) site is built by cysteine 205 and cysteine 208. Residue cysteine 222 is the Glycyl thioester intermediate; for adenylyltransferase activity of the active site. Residues cysteine 283 and cysteine 286 each coordinate Zn(2+). One can recognise a Rhodanese domain in the interval 335-434 (NEKDHILIDV…YIDEEDHSYP (100 aa)). The active-site Cysteine persulfide intermediate; for sulfurtransferase activity is cysteine 393.

This sequence in the N-terminal section; belongs to the HesA/MoeB/ThiF family. UBA4 subfamily. Zn(2+) serves as cofactor.

The protein localises to the cytoplasm. The protein resides in the cytosol. It functions in the pathway tRNA modification; 5-methoxycarbonylmethyl-2-thiouridine-tRNA biosynthesis. In terms of biological role, plays a central role in 2-thiolation of mcm(5)S(2)U at tRNA wobble positions of cytosolic tRNA(Lys), tRNA(Glu) and tRNA(Gln). Acts by mediating the C-terminal thiocarboxylation of sulfur carrier URM1. Its N-terminus first activates URM1 as acyl-adenylate (-COAMP), then the persulfide sulfur on the catalytic cysteine is transferred to URM1 to form thiocarboxylation (-COSH) of its C-terminus. The reaction probably involves hydrogen sulfide that is generated from the persulfide intermediate and that acts as a nucleophile towards URM1. Subsequently, a transient disulfide bond is formed. Does not use thiosulfate as sulfur donor; NFS1 probably acting as a sulfur donor for thiocarboxylation reactions. Prior mcm(5) tRNA modification by the elongator complex is required for 2-thiolation. May also be involved in protein urmylation. The polypeptide is Adenylyltransferase and sulfurtransferase UBA4 (Vanderwaltozyma polyspora (strain ATCC 22028 / DSM 70294 / BCRC 21397 / CBS 2163 / NBRC 10782 / NRRL Y-8283 / UCD 57-17) (Kluyveromyces polysporus)).